A 430-amino-acid polypeptide reads, in one-letter code: Histidinol dehydrogenase (430 aa).

Residues Tyr130, Gln191, and Asn214 each coordinate NAD(+). Residues Ser237, Gln259, and His262 each contribute to the substrate site. Zn(2+) contacts are provided by Gln259 and His262. Active-site proton acceptor residues include Glu327 and His328. Residues His328, Asp361, Glu415, and His420 each coordinate substrate. Residue Asp361 participates in Zn(2+) binding. His420 lines the Zn(2+) pocket.

This sequence belongs to the histidinol dehydrogenase family. Zn(2+) serves as cofactor.

It catalyses the reaction L-histidinol + 2 NAD(+) + H2O = L-histidine + 2 NADH + 3 H(+). The protein operates within amino-acid biosynthesis; L-histidine biosynthesis; L-histidine from 5-phospho-alpha-D-ribose 1-diphosphate: step 9/9. Functionally, catalyzes the sequential NAD-dependent oxidations of L-histidinol to L-histidinaldehyde and then to L-histidine. The protein is Histidinol dehydrogenase of Brucella abortus (strain 2308).